The sequence spans 502 residues: MPKTEETVLQNDPSVAENGAPEPKTPGQSQKSKSFCLDDQSPDLIETVNEVSKLSISHEIVVNQDFYVEETILPPNSVEGRFAEAMYNAFWNHLKEQLLSTPPDFTCALELLKDVKETLLSLLLPWQNRLRNEIEEALDTDLLKQEAEHGALDVPHLSNYILNLMALLCAPVRDEAIQKLETIRDPVQLLRGILRVLGLMKMDMVNYTIQSFRPYLQEHSIQYEQAKFQELLDKQPSLLDYTTKWLTKAATDITTLCPSSPDSPSSSCSMACSLPSGAGNNSEPPSPTMVLYQGYLNLLLWDLENVEFPETLLMDRIRLQELAFQLHQLTVLASVLLVARSFSGEVLFRSPEFVDRLKCTTKALTEEFISRPEETMLSVSEQVSQEVHQGLKDMGLTTLSSENTASLLGQLQNITKKENCIRSIVDQWIRFFLKCCLLHGMQESLLHFPGGLILIEKELAELGWKFLNLMHHNQQVFGPYYAEILKHIIHPAQAQETDVEPN.

Positions 1–36 are disordered; that stretch reads MPKTEETVLQNDPSVAENGAPEPKTPGQSQKSKSFC.

The protein belongs to the TCP11 family.

This is T-complex protein 11-like X-linked protein 2 from Homo sapiens (Human).